The chain runs to 455 residues: 1-deoxy-D-xylulose 5-phosphate reductoisomerase (455 aa).

Residues Thr30, Gly31, Ser32, Ile33, Gln63, and Asn159 each coordinate NADPH. Lys160 is a binding site for 1-deoxy-D-xylulose 5-phosphate. Glu161 serves as a coordination point for NADPH. Asp185 lines the Mn(2+) pocket. 1-deoxy-D-xylulose 5-phosphate contacts are provided by Ser186 and Glu187. Position 187 (Glu187) interacts with Mn(2+). Positions 205–214 (YATAKQSIQP) are enriched in polar residues. A disordered region spans residues 205–233 (YATAKQSIQPESVRATDPPSSTTDSPAKT). Positions 246 and 269 each coordinate 1-deoxy-D-xylulose 5-phosphate. Gly275 contributes to the NADPH binding site. 1-deoxy-D-xylulose 5-phosphate contacts are provided by Ser282, Asn287, Lys288, and Glu291. Glu291 contacts Mn(2+).

This sequence belongs to the DXR family. It depends on Mg(2+) as a cofactor. Requires Mn(2+) as cofactor.

The catalysed reaction is 2-C-methyl-D-erythritol 4-phosphate + NADP(+) = 1-deoxy-D-xylulose 5-phosphate + NADPH + H(+). It participates in isoprenoid biosynthesis; isopentenyl diphosphate biosynthesis via DXP pathway; isopentenyl diphosphate from 1-deoxy-D-xylulose 5-phosphate: step 1/6. Its function is as follows. Catalyzes the NADPH-dependent rearrangement and reduction of 1-deoxy-D-xylulose-5-phosphate (DXP) to 2-C-methyl-D-erythritol 4-phosphate (MEP). This Rhodopirellula baltica (strain DSM 10527 / NCIMB 13988 / SH1) protein is 1-deoxy-D-xylulose 5-phosphate reductoisomerase.